The chain runs to 302 residues: Deoxyhypusine hydroxylase (302 aa).

N-acetylmethionine is present on Met1. HEAT-like PBS-type repeat units lie at residues 54 to 80, 87 to 113, 175 to 201, 206 to 232, and 239 to 265; these read LKHELAYCLGQMRDPRAIPVLVSVLQD, VRHEAGEALGAIGNPKVLGLLKQYSTD, ERYRAMFALRNVGGKEAALALAEGLKC, FRHEVGYVLGQLQHEAAVSELAATLAR, and VRHECAEALGAIARPACLAALREYITD. 3 residues coordinate Fe cation: His56, His89, and Glu90. His208, His241, and Glu242 together coordinate Fe cation.

Belongs to the deoxyhypusine hydroxylase family. The cofactor is Fe(2+).

It carries out the reaction [eIF5A protein]-deoxyhypusine + AH2 + O2 = [eIF5A protein]-hypusine + A + H2O. It participates in protein modification; eIF5A hypusination. Functionally, catalyzes the hydroxylation of the N(6)-(4-aminobutyl)-L-lysine intermediate produced by deoxyhypusine synthase/DHPS on a critical lysine of the eukaryotic translation initiation factor 5A/eIF-5A. This is the second step of the post-translational modification of that lysine into an unusual amino acid residue named hypusine. Hypusination is unique to mature eIF-5A factor and is essential for its function. The protein is Deoxyhypusine hydroxylase (Dohh) of Rattus norvegicus (Rat).